Consider the following 263-residue polypeptide: Purine nucleoside phosphorylase SAR1163 (263 aa).

Residues histidine 79, cysteine 124, and histidine 141 each coordinate Zn(2+).

It belongs to the purine nucleoside phosphorylase YfiH/LACC1 family. In terms of assembly, homodimer. It depends on Cu(2+) as a cofactor. The cofactor is Zn(2+).

The catalysed reaction is adenosine + phosphate = alpha-D-ribose 1-phosphate + adenine. It carries out the reaction S-methyl-5'-thioadenosine + phosphate = 5-(methylsulfanyl)-alpha-D-ribose 1-phosphate + adenine. It catalyses the reaction inosine + phosphate = alpha-D-ribose 1-phosphate + hypoxanthine. The enzyme catalyses adenosine + H2O + H(+) = inosine + NH4(+). In terms of biological role, purine nucleoside enzyme that catalyzes the phosphorolysis of adenosine and inosine nucleosides, yielding D-ribose 1-phosphate and the respective free bases, adenine and hypoxanthine. Also catalyzes the phosphorolysis of S-methyl-5'-thioadenosine into adenine and S-methyl-5-thio-alpha-D-ribose 1-phosphate. Also has adenosine deaminase activity. The protein is Purine nucleoside phosphorylase SAR1163 of Staphylococcus aureus (strain MRSA252).